The sequence spans 329 residues: Quinone-oxidoreductase homolog, chloroplastic (329 aa).

Belongs to the zinc-containing alcohol dehydrogenase family. Quinone oxidoreductase subfamily. In terms of processing, the transit peptide is not cleaved.

The protein localises to the plastid. It is found in the chloroplast inner membrane. The sequence is that of Quinone-oxidoreductase homolog, chloroplastic (QOR) from Spinacia oleracea (Spinach).